A 233-amino-acid polypeptide reads, in one-letter code: Ciliary microtubule inner protein 6 (233 aa).

Basic and acidic residues-rich tracts occupy residues 1-14 (MEGE…KTED) and 21-33 (AERK…EKSP). A disordered region spans residues 1–45 (MEGEEKQQQHKTEDDGIACVAERKVEIKNEKSPGKSTQHPKPCVD). Residues 127–159 (GIVPLTSLDVSGEHENNFVEYISFIHQYDARRT) form a mn region. The segment at 192 to 233 (LLNTLESGSSEQPQKTDKGNSSGDKVTSPGLCQQNSQELLET) is disordered. Over residues 195–233 (TLESGSSEQPQKTDKGNSSGDKVTSPGLCQQNSQELLET) the composition is skewed to polar residues.

The protein resides in the cell projection. Its subcellular location is the cilium. The protein is Ciliary microtubule inner protein 6 (Cimip6) of Mus musculus (Mouse).